Reading from the N-terminus, the 131-residue chain is Small ribosomal subunit protein uS9 (131 aa).

It belongs to the universal ribosomal protein uS9 family.

The sequence is that of Small ribosomal subunit protein uS9 from Actinobacillus succinogenes (strain ATCC 55618 / DSM 22257 / CCUG 43843 / 130Z).